The primary structure comprises 176 residues: Membrane-anchored junction protein (176 aa).

Residues 1 to 151 lie on the Nuclear side of the membrane; sequence MSLKPFTYPF…QHNSPPPKER (151 aa). Positions 59–150 are disordered; it reads AVMRKRKHMD…LQHNSPPPKE (92 aa). Basic and acidic residues predominate over residues 95 to 107; that stretch reads PPVETRRNRERKT. The segment covering 108 to 120 has biased composition (polar residues); that stretch reads QQGLQETLASDIT. Residues 152–170 traverse the membrane as a helical segment; it reads AATGFFGFLSSLFPFRYFF. The Perinuclear space portion of the chain corresponds to 171-176; it reads RKSSHS.

Belongs to the MAJIN family. In terms of assembly, component of the MAJIN-TERB1-TERB2 complex, composed of MAJIN, TERB1 and TERB2.

It localises to the nucleus inner membrane. Its subcellular location is the chromosome. It is found in the telomere. Functionally, meiosis-specific telomere-associated protein involved in meiotic telomere attachment to the nucleus inner membrane, a crucial step for homologous pairing and synapsis. Component of the MAJIN-TERB1-TERB2 complex, which promotes telomere cap exchange by mediating attachment of telomeric DNA to the inner nuclear membrane and replacement of the protective cap of telomeric chromosomes: in early meiosis, the MAJIN-TERB1-TERB2 complex associates with telomeric DNA and the shelterin/telosome complex. During prophase, the complex matures and promotes release of the shelterin/telosome complex from telomeric DNA. In the complex, MAJIN acts as the anchoring subunit to the nucleus inner membrane. MAJIN shows DNA-binding activity, possibly for the stabilization of telomere attachment on the nucleus inner membrane. The polypeptide is Membrane-anchored junction protein (Homo sapiens (Human)).